Here is a 562-residue protein sequence, read N- to C-terminus: NAD-dependent malic enzyme (562 aa).

Residue Tyr-101 is the Proton donor of the active site. Residue Arg-154 participates in NAD(+) binding. Lys-172 (proton acceptor) is an active-site residue. Glu-243, Asp-244, and Asp-267 together coordinate a divalent metal cation. Residues Asp-267 and Asn-415 each coordinate NAD(+).

This sequence belongs to the malic enzymes family. As to quaternary structure, homotetramer. Requires Mg(2+) as cofactor. Mn(2+) serves as cofactor.

The enzyme catalyses (S)-malate + NAD(+) = pyruvate + CO2 + NADH. The catalysed reaction is oxaloacetate + H(+) = pyruvate + CO2. The sequence is that of NAD-dependent malic enzyme from Shewanella putrefaciens (strain CN-32 / ATCC BAA-453).